We begin with the raw amino-acid sequence, 988 residues long: Transcriptional regulator of yeast form adherence 5 (988 aa).

C2H2-type zinc fingers lie at residues 7 to 29 (YICAFCARAFTRSEHKQRHERSH) and 35 to 59 (FHCLHCTSSFVRRDLLQRHCRTVHH). Over residues 59-83 (HTNLNPSTLPSNKSLKNPTTNPLDL) the composition is skewed to polar residues. 2 disordered regions span residues 59-129 (HTNL…SSVG) and 174-229 (SMES…SNNN). Residues 84-106 (SNNEGTTTTTKTGNRKNNSNKNG) show a composition bias toward low complexity. Composition is skewed to polar residues over residues 113–129 (TNPNPAVSNDDNRSSVG) and 174–208 (SMESDQHSLTTFDSPTSSLGVSMTPSGSTNSEIVL).

The protein localises to the nucleus. Its function is as follows. Transcription factor required for yeast cell adherence to silicone substrate. The sequence is that of Transcriptional regulator of yeast form adherence 5 (TRY5) from Candida albicans (strain SC5314 / ATCC MYA-2876) (Yeast).